Consider the following 149-residue polypeptide: Transcriptional repressor NrdR (149 aa).

A zinc finger spans residues 3–34 (CPFCSAVDTKVIDSRLVAEGHQVRRRRECLLC). The region spanning 49–139 (PRVIKSNGSR…VYRSFEDIRE (91 aa)) is the ATP-cone domain.

Belongs to the NrdR family. Zn(2+) serves as cofactor.

Functionally, negatively regulates transcription of bacterial ribonucleotide reductase nrd genes and operons by binding to NrdR-boxes. The protein is Transcriptional repressor NrdR of Aeromonas salmonicida (strain A449).